The primary structure comprises 267 residues: DNA repair protein RecO (267 aa).

Belongs to the RecO family.

Its function is as follows. Involved in DNA repair and RecF pathway recombination. The chain is DNA repair protein RecO from Mesoplasma florum (strain ATCC 33453 / NBRC 100688 / NCTC 11704 / L1) (Acholeplasma florum).